A 271-amino-acid chain; its full sequence is MPSLTPRCIIVRHGQTEWSKSGQYTGLTDLPLTPYGEGQMLRTGESVFRNNQFLNPDNITYIFTSPRLRARQTVDLVLKPLSDEQRAKIRVVVDDDLREWEYGDYEGMLTREIIELRKSRGLDKERPWNIWRDGCENGETTQQIGLRLSRAIARIQNLHRKHQSEGRASDIMVFAHGHALRYFAAIWFGLGVQKKCETIEEIQNVKSYDDDTVPYVKLESYRHLVDNPCFLLDAGGIGVLSYAHHNIDEPALELAGPFVSPPEEESQHGDV.

R12 lines the substrate pocket. H13 acts as the Tele-phosphohistidine intermediate in catalysis. Residues Y24–T25, R69, E99–Y102, R181, and H244 contribute to the substrate site. Catalysis depends on E99, which acts as the Proton donor/acceptor.

The protein belongs to the phosphoglycerate mutase family. SHB17 subfamily. Homodimer.

The protein resides in the cytoplasm. Its subcellular location is the nucleus. The enzyme catalyses D-sedoheptulose 1,7-bisphosphate + H2O = D-sedoheptulose 7-phosphate + phosphate. In terms of biological role, sedoheptulose 1,7-bisphosphatase involved in riboneogenesis. Dephosphorylates sedoheptulose 1,7-bisphosphate (SBP), which is converted via the non-oxidative pentose phosphate pathway to ribose-5-phosphate. Has a fructose 1,6-bisphosphatase activity in vitro, but this is probably not biologically relevant, since deletion does not affect fructose 1,6-biphosphate (FBP) levels. The protein is Sedoheptulose 1,7-bisphosphatase (SHB17) of Saccharomyces cerevisiae (strain ATCC 204508 / S288c) (Baker's yeast).